Consider the following 112-residue polypeptide: Head virion protein G6P (112 aa).

Helical transmembrane passes span 3–23 (VLLG…TLFG), 36–56 (IAIA…ILVG), and 80–100 (NALP…IFDV).

It belongs to the inovirus G6P protein family. In terms of assembly, interacts with G3P; this interaction is required for proper integration of G3P and G6P into the virion.

Its subcellular location is the virion. It is found in the host membrane. Its function is as follows. Plays essential roles both in the entry of the viral genome into the bacterial host and in budding process. The formation of the G3P-G6P complex termed adsorption complex is essential for correct termination of filamentous phage assembly. The polypeptide is Head virion protein G6P (VI) (Escherichia coli (Bacteriophage f1)).